Reading from the N-terminus, the 274-residue chain is Mitochondrial outer membrane protein porin 1 (274 aa).

Belongs to the eukaryotic mitochondrial porin (TC 1.B.8.1) family. As to expression, expressed in shoots and roots. Also expressed in callus, leaves, panicles, sheaths and stems.

It is found in the mitochondrion outer membrane. Forms a channel through the mitochondrial outer membrane that allows diffusion of small hydrophilic molecules. The channel adopts an open conformation at low or zero membrane potential and a closed conformation at potentials above 30-40 mV. The open state has a weak anion selectivity whereas the closed state is cation-selective. The sequence is that of Mitochondrial outer membrane protein porin 1 (VDAC1) from Oryza sativa subsp. japonica (Rice).